The chain runs to 280 residues: NAD(+) hydrolase TirS (280 aa).

Positions 22–94 (MNKLPDEIDR…KINLQKEQSR (73 aa)) form a coiled coil. The 135-residue stretch at 141–275 (IEYDVFLSHS…EIVEKIYQVI (135 aa)) folds into the TIR domain. NAD(+)-binding positions include 150-151 (SS) and E180. The active site involves E216.

The protein resides in the secreted. The catalysed reaction is NAD(+) + H2O = ADP-D-ribose + nicotinamide + H(+). It catalyses the reaction NADP(+) + H2O = ADP-D-ribose 2'-phosphate + nicotinamide + H(+). In terms of biological role, virulence factor that suppresses host Toll-like receptor 2 (TLR2)-mediated NF-kappa-B signaling upon infection. NAD(+) hydrolase (NADase) that catalyzes cleavage of NAD(+) into ADP-D-ribose (ADPR) and nicotinamide. Also able to hydrolyze NADP(+), but not other NAD(+)-related molecules. Able to reduce NAD(+) levels in host cells. This is NAD(+) hydrolase TirS from Staphylococcus aureus (strain MSSA476).